A 261-amino-acid chain; its full sequence is Mlc titration factor A (261 aa).

H111, H148, H152, and E211 together coordinate Zn(2+).

Belongs to the MtfA family. Interacts with Mlc. The cofactor is Zn(2+).

The protein resides in the cytoplasm. Involved in the modulation of the activity of the glucose-phosphotransferase system (glucose-PTS). Interacts with the transcriptional repressor Mlc, preventing its interaction with DNA and leading to the modulation of expression of genes regulated by Mlc, including ptsG, which encodes the PTS system glucose-specific EIICB component. Functionally, shows zinc-dependent metallopeptidase activity. The polypeptide is Mlc titration factor A (Edwardsiella ictaluri (strain 93-146)).